The following is an 88-amino-acid chain: Putative membrane protein insertion efficiency factor (88 aa).

The tract at residues 66 to 88 is disordered; sequence DFVPPKKEKNADSEHSCKAHHHH. Residues 69–82 show a composition bias toward basic and acidic residues; sequence PPKKEKNADSEHSC.

This sequence belongs to the UPF0161 family.

It is found in the cell membrane. Could be involved in insertion of integral membrane proteins into the membrane. The polypeptide is Putative membrane protein insertion efficiency factor (Listeria monocytogenes serotype 4b (strain CLIP80459)).